A 291-amino-acid chain; its full sequence is Potassium-transporting ATPase subunit beta (291 aa).

The Cytoplasmic segment spans residues 1–36 (MAALQEKKSCSQRMEEFRHYCWNPDTGQMLGRTLSR). The helical; Signal-anchor for type II membrane protein transmembrane segment at 37–57 (WVWISLYYVAFYVVMTGLFAL) threads the bilayer. Over 58-291 (CIYVLMQTID…KVEFKLKIQK (234 aa)) the chain is Extracellular. N-linked (GlcNAc...) asparagine glycosylation is found at Asn99, Asn103, Asn130, Asn146, and Asn161. The cysteines at positions 131 and 152 are disulfide-linked. A disulfide bridge connects residues Cys162 and Cys178. Asn193 and Asn222 each carry an N-linked (GlcNAc...) asparagine glycan. Residues 194-291 (STPPRVDCTF…KVEFKLKIQK (98 aa)) form an immunoglobulin-like region. A disulfide bond links Cys201 and Cys263.

It belongs to the X(+)/potassium ATPases subunit beta family. As to quaternary structure, the ATPase pump is composed of two subunits: alpha (catalytic) and beta (regulatory). Interacts with alpha subunit ATP12A; this interaction is required for the formation of a functionally active pump and targeting at the plasma membrane. Interacts (via N-terminus) with alpha subunit ATP4A (via the P-domain). In terms of processing, N-glycosylation is necessary for assembly and functional expression of the pump at the plasma membrane.

The protein localises to the apical cell membrane. It localises to the cell membrane. Functionally, the beta subunit of the gastric H(+)/K(+) ATPase pump which transports H(+) ions in exchange for K(+) ions across the apical membrane of parietal cells. Plays a structural and regulatory role in the assembly and membrane targeting of a functionally active pump. Within a transport cycle, the transfer of a H(+) ion across the membrane is coupled to ATP hydrolysis and is associated with a transient phosphorylation of the alpha subunit that shifts the pump conformation from inward-facing (E1) to outward-facing state (E2). Interacts with the phosphorylation domain of the alpha subunit and functions as a ratchet, stabilizing the lumenal-open E2 conformation and preventing the reverse reaction of the transport cycle. This is Potassium-transporting ATPase subunit beta (ATP4B) from Oryctolagus cuniculus (Rabbit).